A 396-amino-acid chain; its full sequence is S-adenosylmethionine synthase (396 aa).

Histidine 16 serves as a coordination point for ATP. Aspartate 18 lines the Mg(2+) pocket. Position 44 (glutamate 44) interacts with K(+). Positions 57 and 100 each coordinate L-methionine. Positions 100-110 are flexible loop; sequence QSKDIALGVDK. ATP-binding positions include 176–178, 243–244, aspartate 252, 258–259, alanine 275, and lysine 279; these read DGK, RF, and RK. Aspartate 252 provides a ligand contact to L-methionine. Lysine 283 provides a ligand contact to L-methionine.

The protein belongs to the AdoMet synthase family. As to quaternary structure, homotetramer; dimer of dimers. Mg(2+) is required as a cofactor. The cofactor is K(+).

Its subcellular location is the cytoplasm. The catalysed reaction is L-methionine + ATP + H2O = S-adenosyl-L-methionine + phosphate + diphosphate. Its pathway is amino-acid biosynthesis; S-adenosyl-L-methionine biosynthesis; S-adenosyl-L-methionine from L-methionine: step 1/1. In terms of biological role, catalyzes the formation of S-adenosylmethionine (AdoMet) from methionine and ATP. The overall synthetic reaction is composed of two sequential steps, AdoMet formation and the subsequent tripolyphosphate hydrolysis which occurs prior to release of AdoMet from the enzyme. In Lachnoclostridium phytofermentans (strain ATCC 700394 / DSM 18823 / ISDg) (Clostridium phytofermentans), this protein is S-adenosylmethionine synthase.